The chain runs to 750 residues: Photosystem I P700 chlorophyll a apoprotein A1 (750 aa).

8 helical membrane passes run 70–93 (VFSA…FHGA), 156–179 (LYCT…FHYH), 195–219 (LNHH…HVSL), 291–309 (TAHH…GHMY), 346–369 (WHAQ…HHMY), 385–411 (LSLF…IFMV), 433–455 (AIIS…LYIH), and 531–549 (FLVH…LILL). Cys573 and Cys582 together coordinate [4Fe-4S] cluster. Transmembrane regions (helical) follow at residues 589 to 610 (HVFL…HFSW) and 664 to 686 (LSAY…MFLF). His675 provides a ligand contact to chlorophyll a'. The chlorophyll a site is built by Met683 and Tyr691. Position 692 (Trp692) interacts with phylloquinone. A helical transmembrane segment spans residues 724–744 (AVGVAHYLLGGIATTWAFFLA).

This sequence belongs to the PsaA/PsaB family. As to quaternary structure, the PsaA/B heterodimer binds the P700 chlorophyll special pair and subsequent electron acceptors. PSI consists of a core antenna complex that captures photons, and an electron transfer chain that converts photonic excitation into a charge separation. The eukaryotic PSI reaction center is composed of at least 11 subunits. P700 is a chlorophyll a/chlorophyll a' dimer, A0 is one or more chlorophyll a, A1 is one or both phylloquinones and FX is a shared 4Fe-4S iron-sulfur center. serves as cofactor.

It localises to the plastid. Its subcellular location is the chloroplast thylakoid membrane. The enzyme catalyses reduced [plastocyanin] + hnu + oxidized [2Fe-2S]-[ferredoxin] = oxidized [plastocyanin] + reduced [2Fe-2S]-[ferredoxin]. Its function is as follows. PsaA and PsaB bind P700, the primary electron donor of photosystem I (PSI), as well as the electron acceptors A0, A1 and FX. PSI is a plastocyanin-ferredoxin oxidoreductase, converting photonic excitation into a charge separation, which transfers an electron from the donor P700 chlorophyll pair to the spectroscopically characterized acceptors A0, A1, FX, FA and FB in turn. Oxidized P700 is reduced on the lumenal side of the thylakoid membrane by plastocyanin. The polypeptide is Photosystem I P700 chlorophyll a apoprotein A1 (Angiopteris evecta (Mule's foot fern)).